Consider the following 201-residue polypeptide: Small ribosomal subunit protein uS4c (201 aa).

Residues M89–L152 form the S4 RNA-binding domain.

It belongs to the universal ribosomal protein uS4 family. In terms of assembly, part of the 30S ribosomal subunit. Contacts protein S5. The interaction surface between S4 and S5 is involved in control of translational fidelity.

Its subcellular location is the plastid. The protein resides in the chloroplast. Functionally, one of the primary rRNA binding proteins, it binds directly to 16S rRNA where it nucleates assembly of the body of the 30S subunit. Its function is as follows. With S5 and S12 plays an important role in translational accuracy. The protein is Small ribosomal subunit protein uS4c (rps4) of Olimarabidopsis pumila (Dwarf rocket).